A 285-amino-acid polypeptide reads, in one-letter code: Undecaprenyl-diphosphatase (285 aa).

7 helical membrane-spanning segments follow: residues 40–60 (DELL…LLYF), 92–112 (LCIL…ENFI), 122–142 (SVYA…WADA), 159–179 (FLIG…RSGI), 197–217 (FSML…LLGL), 233–253 (LIVA…LMAL), and 259–279 (FLPF…TSPI).

The protein belongs to the UppP family.

It localises to the cell inner membrane. It carries out the reaction di-trans,octa-cis-undecaprenyl diphosphate + H2O = di-trans,octa-cis-undecaprenyl phosphate + phosphate + H(+). Catalyzes the dephosphorylation of undecaprenyl diphosphate (UPP). Confers resistance to bacitracin. The protein is Undecaprenyl-diphosphatase of Hyphomonas neptunium (strain ATCC 15444).